The sequence spans 207 residues: Low-molecular weight cobalt-containing nitrile hydratase subunit alpha (207 aa).

Co(3+) contacts are provided by Cys109, Cys112, Ser113, and Cys114.

The protein belongs to the nitrile hydratase subunit alpha family. Heterodimer of an alpha and a beta chain. Co(3+) is required as a cofactor.

It catalyses the reaction an aliphatic primary amide = an aliphatic nitrile + H2O. Its function is as follows. NHase catalyzes the hydration of various nitrile compounds to the corresponding amides. This is Low-molecular weight cobalt-containing nitrile hydratase subunit alpha from Rhodococcus rhodochrous.